A 248-amino-acid chain; its full sequence is ATP synthase subunit a, chloroplastic (248 aa).

5 helical membrane passes run Gln-38–Val-58, Val-96–Leu-116, Ile-135–Ala-155, Leu-200–Leu-220, and Gly-221–Gly-241.

Belongs to the ATPase A chain family. As to quaternary structure, F-type ATPases have 2 components, CF(1) - the catalytic core - and CF(0) - the membrane proton channel. CF(1) has five subunits: alpha(3), beta(3), gamma(1), delta(1), epsilon(1). CF(0) has four main subunits: a, b, b' and c.

The protein localises to the plastid. Its subcellular location is the chloroplast thylakoid membrane. Its function is as follows. Key component of the proton channel; it plays a direct role in the translocation of protons across the membrane. This chain is ATP synthase subunit a, chloroplastic, found in Cycas taitungensis (Prince sago).